The sequence spans 157 residues: Pyruvoyl-dependent arginine decarboxylase (157 aa).

Pyruvic acid (Ser) is present on serine 44.

The protein belongs to the PdaD family. Requires pyruvate as cofactor.

The catalysed reaction is L-arginine + H(+) = agmatine + CO2. The polypeptide is Pyruvoyl-dependent arginine decarboxylase (Thermococcus kodakarensis (strain ATCC BAA-918 / JCM 12380 / KOD1) (Pyrococcus kodakaraensis (strain KOD1))).